The sequence spans 1065 residues: Leucine-rich repeats and immunoglobulin-like domains protein 2 (1065 aa).

A signal peptide spans 1–40 (MAPAPLGVPEEQLLGCRSRVLSRLLFIAQTALLLLPAAGA). An LRRNT domain is found at 41-75 (GLCPAPCSCRIPLLDCSRRKLPAPSWRALSGLLPP). The Extracellular segment spans residues 41-807 (GLCPAPCSCR…HEDDGWTTVG (767 aa)). LRR repeat units lie at residues 76–97 (DTAI…LESQ), 98–119 (TLQE…GEPT), 121–142 (NITL…ALQF), 145–166 (ALES…SFPR), 168–189 (QLKY…CFDN), 193–214 (SLLV…IFKL), 216–237 (HLQF…TFQG), 240–261 (SLRS…AFFG), 264–285 (NMEE…WLYG), 288–309 (MLQQ…AWEF), 312–333 (RLSE…AFVG), 336–357 (LLER…VFRF), 360–382 (NLQT…SEAF), 387–408 (SLTK…AFIG), and 411–432 (SLEH…AFSQ). Residue Asn-91 is glycosylated (N-linked (GlcNAc...) asparagine). The N-linked (GlcNAc...) asparagine glycan is linked to Asn-121. N-linked (GlcNAc...) asparagine glycans are attached at residues Asn-173 and Asn-189. The N-linked (GlcNAc...) asparagine glycan is linked to Asn-274. N-linked (GlcNAc...) asparagine glycans are attached at residues Asn-441, Asn-468, Asn-514, Asn-571, and Asn-589. The LRRCT domain maps to 443-494 (SSLLCDCHLKWLLQWLVDNNFQHSVNVSCAHPEWLAGQSILNVDLKDFVCDD). Ig-like C2-type domains follow at residues 498–597 (PQIR…AKLT), 602–691 (PSFL…ASLT), and 696–785 (PSFI…NVIS). An intrachain disulfide couples Cys-519 to Cys-580. Cys-623 and Cys-675 are joined by a disulfide. N-linked (GlcNAc...) asparagine glycosylation is found at Asn-687 and Asn-728. A disulfide bond links Cys-717 and Cys-766. Residues 808 to 828 (IVIIVVVCCVVGTSLIWVIVI) traverse the membrane as a helical segment. At 829-1065 (YHMRRKNEDY…RNIQDGSEGT (237 aa)) the chain is on the cytoplasmic side. Tyr-906 is subject to Phosphotyrosine. Disordered stretches follow at residues 963–990 (SANR…QMSG) and 1003–1040 (ELGL…ASSM). Positions 974-983 (NHERISEKKL) are enriched in basic and acidic residues. Over residues 1013–1024 (QQPVHESPQLHQ) the composition is skewed to polar residues.

In terms of tissue distribution, detected in all tissues analyzed.

It localises to the cell membrane. It is found in the cytoplasm. This Homo sapiens (Human) protein is Leucine-rich repeats and immunoglobulin-like domains protein 2 (LRIG2).